Reading from the N-terminus, the 237-residue chain is Heme oxygenase (237 aa).

A heme b-binding site is contributed by His-17.

Belongs to the heme oxygenase family.

Its subcellular location is the plastid. The protein localises to the chloroplast. The enzyme catalyses heme b + 3 reduced [NADPH--hemoprotein reductase] + 3 O2 = biliverdin IXalpha + CO + Fe(2+) + 3 oxidized [NADPH--hemoprotein reductase] + 3 H2O + H(+). Its function is as follows. Catalyzes the opening of the heme ring with the release of iron. Key enzyme in the synthesis of the chromophoric part of the photosynthetic antennae. The sequence is that of Heme oxygenase (pbsA) from Guillardia theta (Cryptophyte).